The sequence spans 289 residues: Oxaloacetate decarboxylase (289 aa).

Substrate is bound at residue serine 50. Position 88 (aspartate 88) interacts with Mg(2+). Residues arginine 159 and histidine 235 each coordinate substrate.

Belongs to the isocitrate lyase/PEP mutase superfamily. Oxaloacetate decarboxylase family. Homotetramer; dimer of dimers. Mg(2+) is required as a cofactor.

The enzyme catalyses oxaloacetate + H(+) = pyruvate + CO2. Catalyzes the decarboxylation of oxaloacetate into pyruvate. Seems to play a role in maintaining cellular concentrations of bicarbonate and pyruvate. The polypeptide is Oxaloacetate decarboxylase (Pseudomonas fluorescens (strain ATCC BAA-477 / NRRL B-23932 / Pf-5)).